Consider the following 548-residue polypeptide: Methyl-accepting chemotaxis protein HlyB (548 aa).

Residues 1-10 lie on the Cytoplasmic side of the membrane; sequence MIINKFSLKW. A helical transmembrane segment spans residues 11–31; sequence MLAIAVAIPAIALLFVAFTSL. The Periplasmic portion of the chain corresponds to 32 to 199; sequence NTMSVMQAQS…SFEAGRTKQM (168 aa). The helical transmembrane segment at 200-220 threads the bilayer; the sequence is VIIAAGLIISFITSLVIITNL. Residues 218–271 form the HAMP domain; sequence TNLRSRVAYLKDRMSSAAANLSLRTRLELDGNDELCDIGKSFNAFIDKVHHSIE. Topologically, residues 221-548 are cytoplasmic; that stretch reads RSRVAYLKDR…LDKLVGSFEL (328 aa). Residues 276–512 form the Methyl-accepting transducer domain; that stretch reads NSKELATMAS…DINRNVEDIN (237 aa).

This sequence belongs to the methyl-accepting chemotaxis (MCP) protein family.

Its subcellular location is the cell inner membrane. Functionally, chemotactic-signal transducers respond to changes in the concentration of attractants and repellents in the environment, transduce a signal from the outside to the inside of the cell, and facilitate sensory adaptation through the variation of the level of methylation. This chain is Methyl-accepting chemotaxis protein HlyB (hlyB), found in Vibrio cholerae serotype O1 (strain ATCC 39315 / El Tor Inaba N16961).